A 66-amino-acid polypeptide reads, in one-letter code: KDGYLVGNDGCKYSCLTRPGHYCASECSRVKGKDGYCYAWMACYCYSMPDWVKTWSRSTNRCGRGK.

Positions 1–63 (KDGYLVGNDG…TWSRSTNRCG (63 aa)) constitute an LCN-type CS-alpha/beta domain. Cystine bridges form between Cys-11–Cys-62, Cys-15–Cys-37, Cys-23–Cys-43, and Cys-27–Cys-45.

Belongs to the long (4 C-C) scorpion toxin superfamily. Sodium channel inhibitor family. Beta subfamily. As to expression, expressed by the venom gland.

Its subcellular location is the secreted. In terms of biological role, beta toxins bind voltage-independently at site-4 of sodium channels (Nav) and shift the voltage of activation toward more negative potentials thereby affecting sodium channel activation and promoting spontaneous and repetitive firing. This is Toxin Tppa1 from Tityus pachyurus (Colombian scorpion).